We begin with the raw amino-acid sequence, 62 residues long: MNNKIKLNFNYVLVIFFTTMVYTCKLNVHFKSELLNIREKYCNLIFDKKMAFIPMVSLKKNR.

It localises to the plastid. The protein localises to the chloroplast. This is an uncharacterized protein from Porphyra purpurea (Red seaweed).